We begin with the raw amino-acid sequence, 331 residues long: Nacrein-like protein P1 (331 aa).

Positions 1 to 331 (QSPINIVSYD…LHALRNVEGY (331 aa)) constitute an Alpha-carbonic anhydrase domain. Histidine 69, histidine 71, and histidine 94 together coordinate Zn(2+). The segment at 138–240 (DEPDDEECKR…GENGHKHGCR (103 aa)) is disordered. Positions 144–156 (ECKRILKGHHPDN) are enriched in basic and acidic residues. Low complexity predominate over residues 157 to 232 (NENGNGDNGN…NNGENGNNGE (76 aa)). A run of 24 repeats spans residues 162–164 (GDN), 165–167 (GNN), 168–170 (GYN), 171–173 (GDN), 174–176 (GNN), 177–179 (GDN), 180–182 (GNN), 183–185 (GYN), 186–188 (GDN), 189–191 (GNN), 192–194 (GDN), 195–197 (GNN), 198–200 (GYN), 201–203 (GDN), 204–206 (GNN), 207–209 (GDN), 210–212 (GNN), 213–215 (GEN), 216–218 (GNN), 219–221 (GEN), 222–224 (GNN), 225–227 (GEN), 228–229 (GN), and 231–233 (GEN). Residues 162–233 (GDNGNNGYNG…NGENGNNGEN (72 aa)) are 24 X 3 AA approximate tandem repeats of G-X-N. 298–299 (TT) is a substrate binding site.

The protein belongs to the alpha-carbonic anhydrase family. As to quaternary structure, homooligomer; disulfide-linked. May also be disulfide-linked to insoluble organic matrix. Zn(2+) is required as a cofactor. In terms of tissue distribution, expressed in the mantle.

The protein localises to the secreted. The protein resides in the extracellular space. It is found in the extracellular matrix. It catalyses the reaction hydrogencarbonate + H(+) = CO2 + H2O. In terms of biological role, acts as a negative regulator for calcification in the shells of mollusks. May function both as a calcium concentrator and as a carbonic anhydrase required for production of carbonate ions, which are assembled to CaCO(3) at mineralization sites. Is important for shell formation in both the calcitic prismatic layer and the aragonitic nacreous layer. Shows inhibitory activity of crystal formation when present in free state but, when attached to the insoluble matrix, may regulate the form and size of aragonite crystal. The sequence is that of Nacrein-like protein P1 from Mizuhopecten yessoensis (Japanese scallop).